A 314-amino-acid polypeptide reads, in one-letter code: Serine/threonine-protein phosphatase CPPED1 (314 aa).

Phosphoserine is present on Ser-2. Residues 47-250 (KAWSTGDCDN…KVVFSGHYHR (204 aa)) form a catalytic region. A divalent metal cation-binding residues include Asp-53, Asp-90, Asn-127, and His-247. Ser-294 carries the phosphoserine modification.

It belongs to the metallophosphoesterase superfamily. CPPED1 family. A divalent metal cation is required as a cofactor. In terms of tissue distribution, expressed in subcutaneous adipose tissue.

It localises to the cytoplasm. The enzyme catalyses O-phospho-L-seryl-[protein] + H2O = L-seryl-[protein] + phosphate. It carries out the reaction O-phospho-L-threonyl-[protein] + H2O = L-threonyl-[protein] + phosphate. In terms of biological role, protein phosphatase that dephosphorylates AKT family kinase specifically at 'Ser-473', blocking cell cycle progression and promoting cell apoptosis. May play an inhibitory role in glucose uptake by adipocytes. The sequence is that of Serine/threonine-protein phosphatase CPPED1 (CPPED1) from Homo sapiens (Human).